We begin with the raw amino-acid sequence, 273 residues long: MAIVKCKPTSAGRRFVVKVVNQELHKGAPYAPLLEKKSKSGGRNNNGRITTRHIGGGHKQHYRLVDFRRNKDGIPAIVERVEYDPNRTAHIALLKYADGERRYIIAPKGVAAGDQLISGIGAPIKAGNSMPLRNIPVGSTVHGIELKPGKGAQIARSAGASAQLVAREGAYVTLRLRSGEMRKVLAECRATLGEVSNSEHSLRSLGKAGATRWRGVRPTVRGVAMNPVDHPHGGGEGRTSAGRHPVSPWGLQTKGKKTRSNKRTDNMIVRRRK.

Disordered regions lie at residues 34 to 54 and 223 to 273; these read LEKK…TRHI and VAMN…RRRK.

This sequence belongs to the universal ribosomal protein uL2 family. As to quaternary structure, part of the 50S ribosomal subunit. Forms a bridge to the 30S subunit in the 70S ribosome.

One of the primary rRNA binding proteins. Required for association of the 30S and 50S subunits to form the 70S ribosome, for tRNA binding and peptide bond formation. It has been suggested to have peptidyltransferase activity; this is somewhat controversial. Makes several contacts with the 16S rRNA in the 70S ribosome. The chain is Large ribosomal subunit protein uL2 from Pseudomonas aeruginosa (strain LESB58).